The following is a 237-amino-acid chain: 3-oxoacyl-[acyl-carrier-protein] reductase (237 aa).

Methionine 1 is modified (N-acetylmethionine). NADP(+) is bound by residues 11 to 14 (SRGI), 34 to 35 (RN), aspartate 56, and 83 to 85 (AAG). Residue serine 135 participates in substrate binding. Residues tyrosine 148, lysine 152, and 181–183 (IHT) each bind NADP(+). Catalysis depends on tyrosine 148, which acts as the Proton acceptor. Lysine 195 carries the N6-acetyllysine modification.

It belongs to the short-chain dehydrogenases/reductases (SDR) family. In terms of assembly, homotetramer (in vitro). Heterotetramer with HSD17B8; contains two molecules each of HSD17B8 and CBR4. Does not form homotetramers when HSD17B8 is coexpressed, only heterotetramers (in vitro).

Its subcellular location is the mitochondrion matrix. The catalysed reaction is a (3R)-hydroxyacyl-[ACP] + NADP(+) = a 3-oxoacyl-[ACP] + NADPH + H(+). The enzyme catalyses a quinone + NADPH + H(+) = a quinol + NADP(+). It participates in lipid metabolism; fatty acid biosynthesis. In terms of biological role, component of the heterotetramer complex KAR (3-ketoacyl-[acyl carrier protein] reductase or 3-ketoacyl-[ACP] reductase) that forms part of the mitochondrial fatty acid synthase (mtFAS). Beta-subunit of the KAR heterotetramer complex, responsible for the 3-ketoacyl-ACP reductase activity of the mtFAS, reduces 3-oxoacyl-[ACP] to (3R)-hydroxyacyl-[ACP] in a NADPH-dependent manner with no chain length preference, thereby participating in mitochondrial fatty acid biosynthesis. The homotetramer has NADPH-dependent quinone reductase activity (in vitro), hence could play a role in protection against cytotoxicity of exogenous quinones. As a heterotetramer, it can also reduce 9,10-phenanthrenequinone, 1,4-benzoquinone and various other o-quinones and p-quinones (in vitro). The chain is 3-oxoacyl-[acyl-carrier-protein] reductase (CBR4) from Bos taurus (Bovine).